A 312-amino-acid polypeptide reads, in one-letter code: D-alanine--D-alanine ligase (312 aa).

The 206-residue stretch at 102-307 (KKIFKMEGIP…FPELTDRLIK (206 aa)) folds into the ATP-grasp domain. Residue 136-191 (IKEVGVPAVVKANTQGSTIGITFVHVKEKMAEAIESALKYDQDVLVEQFVAGTEVT) coordinates ATP. Mg(2+)-binding residues include D262, E274, and N276.

It belongs to the D-alanine--D-alanine ligase family. The cofactor is Mg(2+). Requires Mn(2+) as cofactor.

It localises to the cytoplasm. The enzyme catalyses 2 D-alanine + ATP = D-alanyl-D-alanine + ADP + phosphate + H(+). The protein operates within cell wall biogenesis; peptidoglycan biosynthesis. Its function is as follows. Cell wall formation. The chain is D-alanine--D-alanine ligase from Desulforamulus reducens (strain ATCC BAA-1160 / DSM 100696 / MI-1) (Desulfotomaculum reducens).